The primary structure comprises 377 residues: 23S rRNA (uracil(747)-C(5))-methyltransferase RlmC (377 aa).

[4Fe-4S] cluster is bound by residues cysteine 3, cysteine 11, cysteine 14, and cysteine 87. S-adenosyl-L-methionine-binding residues include glutamine 212, phenylalanine 241, glutamate 262, and asparagine 307. Catalysis depends on cysteine 334, which acts as the Nucleophile.

Belongs to the class I-like SAM-binding methyltransferase superfamily. RNA M5U methyltransferase family. RlmC subfamily.

The catalysed reaction is uridine(747) in 23S rRNA + S-adenosyl-L-methionine = 5-methyluridine(747) in 23S rRNA + S-adenosyl-L-homocysteine + H(+). Catalyzes the formation of 5-methyl-uridine at position 747 (m5U747) in 23S rRNA. The protein is 23S rRNA (uracil(747)-C(5))-methyltransferase RlmC of Proteus mirabilis (strain HI4320).